A 420-amino-acid polypeptide reads, in one-letter code: F-box protein At5g07610 (420 aa).

The tract at residues 1–25 (MSSCSRTRTKAPRSARSRRNGGFSS) is disordered. Residues 7-19 (TRTKAPRSARSRR) are compositionally biased toward basic residues. The 51-residue stretch at 27 to 77 (SATIVADIDDVLIQILSFLPIKTLLRFKRVSKRWLSLITNPVFSNRVIKSN) folds into the F-box domain.

This chain is F-box protein At5g07610, found in Arabidopsis thaliana (Mouse-ear cress).